Consider the following 90-residue polypeptide: Probable Fe(2+)-trafficking protein (90 aa).

Belongs to the Fe(2+)-trafficking protein family.

In terms of biological role, could be a mediator in iron transactions between iron acquisition and iron-requiring processes, such as synthesis and/or repair of Fe-S clusters in biosynthetic enzymes. In Polynucleobacter asymbioticus (strain DSM 18221 / CIP 109841 / QLW-P1DMWA-1) (Polynucleobacter necessarius subsp. asymbioticus), this protein is Probable Fe(2+)-trafficking protein.